Here is a 491-residue protein sequence, read N- to C-terminus: UDP-N-acetylmuramate--L-alanine ligase (491 aa).

An ATP-binding site is contributed by 126–132; sequence GTHGKTT.

The protein belongs to the MurCDEF family.

The protein localises to the cytoplasm. The catalysed reaction is UDP-N-acetyl-alpha-D-muramate + L-alanine + ATP = UDP-N-acetyl-alpha-D-muramoyl-L-alanine + ADP + phosphate + H(+). It participates in cell wall biogenesis; peptidoglycan biosynthesis. Cell wall formation. The sequence is that of UDP-N-acetylmuramate--L-alanine ligase from Salmonella paratyphi A (strain ATCC 9150 / SARB42).